A 494-amino-acid polypeptide reads, in one-letter code: Glutamyl-tRNA(Gln) amidotransferase subunit A (494 aa).

Active-site charge relay system residues include lysine 79 and serine 159. Catalysis depends on serine 183, which acts as the Acyl-ester intermediate.

This sequence belongs to the amidase family. GatA subfamily. Heterotrimer of A, B and C subunits.

The catalysed reaction is L-glutamyl-tRNA(Gln) + L-glutamine + ATP + H2O = L-glutaminyl-tRNA(Gln) + L-glutamate + ADP + phosphate + H(+). Functionally, allows the formation of correctly charged Gln-tRNA(Gln) through the transamidation of misacylated Glu-tRNA(Gln) in organisms which lack glutaminyl-tRNA synthetase. The reaction takes place in the presence of glutamine and ATP through an activated gamma-phospho-Glu-tRNA(Gln). The sequence is that of Glutamyl-tRNA(Gln) amidotransferase subunit A from Bartonella henselae (strain ATCC 49882 / DSM 28221 / CCUG 30454 / Houston 1) (Rochalimaea henselae).